We begin with the raw amino-acid sequence, 67 residues long: Large ribosomal subunit protein bL28 (67 aa).

This sequence belongs to the bacterial ribosomal protein bL28 family.

In Nitratiruptor sp. (strain SB155-2), this protein is Large ribosomal subunit protein bL28.